Consider the following 5376-residue polypeptide: Zonadhesin (5376 aa).

An N-terminal signal peptide occupies residues M1–G17. Residues Q18–S5310 are Extracellular-facing. 3 consecutive MAM domains span residues S45–Q210, Q215–E374, and P377–V542. 2 N-linked (GlcNAc...) asparagine glycosylation sites follow: N339 and N499. Residues E547–S1170 form an 80 X heptapeptide repeats (approximate) (mucin-like domain) region. Disordered stretches follow at residues L553–T579 and T1037–T1113. Over residues T1052–T1113 the composition is skewed to low complexity. The TIL 1 domain maps to C1171 to C1220. Residues N1216, N1239, and N1314 are each glycosylated (N-linked (GlcNAc...) asparagine). The 49-residue stretch at K1227–E1275 folds into the VWFC 1 domain. The VWFD 1 domain maps to A1280–Q1462. 2 cysteine pairs are disulfide-bonded: C1282-C1417 and C1304-C1461. The TIL 2 domain maps to C1555–C1608. Residues G1609–H1664 form the VWFC 2 domain. One can recognise a VWFD 2 domain in the interval A1669–F1849. 2 cysteine pairs are disulfide-bonded: C1671–C1809 and C1693–C1848. Residues N1814, N1908, and N1933 are each glycosylated (N-linked (GlcNAc...) asparagine). The 55-residue stretch at C1941–C1995 folds into the TIL 3 domain. One can recognise a VWFC 3 domain in the interval G1996–A2052. Residues N2028, N2111, N2142, and N2332 are each glycosylated (N-linked (GlcNAc...) asparagine). Residues G2056 to Q2239 form the VWFD 3 domain. Intrachain disulfides connect C2058–C2200 and C2080–C2238. The TIL 4 domain occupies C2340–C2398. The 56-residue stretch at G2399–V2454 folds into the VWFC 4 domain. The TIL 5 domain occupies C2460–C2518. In terms of domain architecture, VWFC 5 spans G2519 to A2574. 2 N-linked (GlcNAc...) asparagine glycosylation sites follow: N2533 and N2575. In terms of domain architecture, TIL 6 spans C2580–C2638. One can recognise a VWFC 6 domain in the interval G2639–T2694. N-linked (GlcNAc...) asparagine glycosylation occurs at N2692. The 59-residue stretch at C2700 to C2758 folds into the TIL 7 domain. A VWFC 7 domain is found at G2759 to T2814. Residue N2812 is glycosylated (N-linked (GlcNAc...) asparagine). A TIL 8 domain is found at C2820 to C2878. In terms of domain architecture, VWFC 8 spans G2879–A2934. One can recognise a TIL 9 domain in the interval C2940–C2998. The region spanning G2999–T3054 is the VWFC 9 domain. 4 N-linked (GlcNAc...) asparagine glycosylation sites follow: N3052, N3065, N3144, and N3172. Positions C3060 to C3118 constitute a TIL 10 domain. Residues G3119–T3174 enclose the VWFC 10 domain. The region spanning C3180 to C3238 is the TIL 11 domain. Positions G3239–T3294 constitute a VWFC 11 domain. Residues N3288 and N3292 are each glycosylated (N-linked (GlcNAc...) asparagine). The TIL 12 domain maps to C3300–C3355. The region spanning G3356–T3411 is the VWFC 12 domain. Residues C3417–C3475 enclose the TIL 13 domain. Residues D3476–A3531 form the VWFC 13 domain. A TIL 14 domain is found at C3537–C3595. The VWFC 14 domain maps to G3596–A3651. The TIL 15 domain occupies C3657–C3715. Residues G3716–A3771 form the VWFC 15 domain. The region spanning C3777–C3835 is the TIL 16 domain. N3782 carries an N-linked (GlcNAc...) asparagine glycan. A VWFC 16 domain is found at G3836–L3891. One can recognise a TIL 17 domain in the interval C3893 to C3951. The region spanning D3952 to T4007 is the VWFC 17 domain. N-linked (GlcNAc...) asparagine glycosylation is present at N4005. Positions C4029–C4087 constitute a TIL 18 domain. The VWFC 18 domain occupies G4088–A4143. N-linked (GlcNAc...) asparagine glycosylation occurs at N4136. The TIL 19 domain maps to C4149–C4207. In terms of domain architecture, VWFC 19 spans G4208 to V4262. N4243 and N4254 each carry an N-linked (GlcNAc...) asparagine glycan. Residues C4264 to C4322 enclose the TIL 20 domain. The region spanning G4323–T4378 is the VWFC 20 domain. Residues N4335 and N4376 are each glycosylated (N-linked (GlcNAc...) asparagine). One can recognise a TIL 21 domain in the interval C4384–C4442. The VWFC 21 domain maps to G4443–V4498. The TIL 22 domain occupies C4504–C4562. The 56-residue stretch at G4563–V4618 folds into the VWFC 22 domain. Residue N4586 is glycosylated (N-linked (GlcNAc...) asparagine). One can recognise a TIL 23 domain in the interval C4624–C4682. One can recognise a VWFC 23 domain in the interval D4683–V4738. A TIL 24 domain is found at C4744–C4802. Positions G4803–A4858 constitute a VWFC 24 domain. The region spanning E4863 to F5038 is the VWFD 4 domain. C4865 and C5001 are oxidised to a cystine. N5136 carries N-linked (GlcNAc...) asparagine glycosylation. The TIL 25 domain maps to C5150 to C5203. In terms of domain architecture, VWFC 25 spans G5204–F5258. Residue N5252 is glycosylated (N-linked (GlcNAc...) asparagine). Residues Q5259–T5295 enclose the EGF-like domain. Disulfide bonds link C5263–C5274, C5268–C5283, and C5285–C5294. Residues L5311–T5337 form a helical membrane-spanning segment. Over R5338–F5376 the chain is Cytoplasmic.

As to quaternary structure, probably forms covalent oligomers. In testis, primarily in haploid spermatids.

The protein resides in the cell membrane. In terms of biological role, binds in a species-specific manner to the zona pellucida of the egg. May be involved in gamete recognition and/or signaling. This chain is Zonadhesin (Zan), found in Mus musculus (Mouse).